Here is an 81-residue protein sequence, read N- to C-terminus: Cytotoxin I-like T-15 (81 aa).

An N-terminal signal peptide occupies residues 1–21; that stretch reads MKTLLLTLVVVTIVCLDLGYT. Cystine bridges form between Cys-24-Cys-42, Cys-35-Cys-59, Cys-63-Cys-74, and Cys-75-Cys-80.

The protein belongs to the three-finger toxin family. Short-chain subfamily. Type IA cytotoxin sub-subfamily. Monomer in solution; Homodimer and oligomer in the presence of negatively charged lipids forming a pore with a size ranging between 20 and 30 Angstroms. In terms of tissue distribution, expressed by the venom gland.

The protein localises to the secreted. The protein resides in the target cell membrane. Shows cytolytic activity on many different cells by forming pore in lipid membranes. In vivo, increases heart rate or kills the animal by cardiac arrest. In addition, it binds to heparin with high affinity, interacts with Kv channel-interacting protein 1 (KCNIP1) in a calcium-independent manner, and binds to integrin alpha-V/beta-3 (ITGAV/ITGB3) with moderate affinity. This Naja atra (Chinese cobra) protein is Cytotoxin I-like T-15.